Here is a 318-residue protein sequence, read N- to C-terminus: Glutathione synthetase (318 aa).

Residues 128 to 313 enclose the ATP-grasp domain; sequence KLAILNFSRF…VAAMFADAVA (186 aa). 154 to 210 is a binding site for ATP; it reads LKEHGDIIIKPLDGMGGMGIFRLTEKDPNIGSILETLMQLDSRTIMAQRYIPEIVHG. Mg(2+)-binding residues include Glu-284 and Asn-286.

It belongs to the prokaryotic GSH synthase family. Mg(2+) serves as cofactor. It depends on Mn(2+) as a cofactor.

The catalysed reaction is gamma-L-glutamyl-L-cysteine + glycine + ATP = glutathione + ADP + phosphate + H(+). It participates in sulfur metabolism; glutathione biosynthesis; glutathione from L-cysteine and L-glutamate: step 2/2. In Neisseria meningitidis serogroup A / serotype 4A (strain DSM 15465 / Z2491), this protein is Glutathione synthetase.